The following is a 284-amino-acid chain: NAD kinase (284 aa).

The Proton acceptor role is filled by Asp60. Residues 60-61 (DG), 134-135 (NE), Arg145, Lys162, Asp164, 175-180 (TAYSFS), and Gln234 each bind NAD(+).

Belongs to the NAD kinase family. The cofactor is a divalent metal cation.

Its subcellular location is the cytoplasm. The enzyme catalyses NAD(+) + ATP = ADP + NADP(+) + H(+). Its function is as follows. Involved in the regulation of the intracellular balance of NAD and NADP, and is a key enzyme in the biosynthesis of NADP. Catalyzes specifically the phosphorylation on 2'-hydroxyl of the adenosine moiety of NAD to yield NADP. The chain is NAD kinase from Clostridium botulinum (strain Eklund 17B / Type B).